The sequence spans 190 residues: Interferon alpha-7 (190 aa).

A signal peptide spans 1-23 (MARLCAFLMVLAVMSYWPTCCLG). Disulfide bonds link Cys-24-Cys-122 and Cys-52-Cys-162. Residue Asn-101 is glycosylated (N-linked (GlcNAc...) asparagine).

This sequence belongs to the alpha/beta interferon family.

The protein localises to the secreted. Its function is as follows. Produced by macrophages, IFN-alpha have antiviral activities. Interferon stimulates the production of two enzymes: a protein kinase and an oligoadenylate synthetase. This chain is Interferon alpha-7 (Ifna7), found in Mus musculus (Mouse).